A 367-amino-acid chain; its full sequence is uncharacterized protein (367 aa).

The protein localises to the mitochondrion. This is an uncharacterized protein from Paramecium tetraurelia.